Here is a 471-residue protein sequence, read N- to C-terminus: Delta(24(24(1)))-sterol reductase erg4A (471 aa).

N-linked (GlcNAc...) asparagine glycosylation occurs at asparagine 15. Helical transmembrane passes span 33 to 53 (VTLIMIGFPLLMYYMYIGAVL), 89 to 109 (WTIYWTFLILEGAGYLYLPGV), 130 to 150 (AVSSWYLTIAAALILHFTGVL), 159 to 179 (FGPLMSVAICSGIFVSIVAYI), 216 to 236 (MFFEVRIPWFILFLLTLGTAL), 244 to 264 (LVAGEVLFLLMAHFLYANACA), 282 to 302 (GFMLIFWNLAGVPMSYCHCTL), and 313 to 333 (HWNPWVLAVWAVAYLFMYWVW). NADP(+) is bound by residues lysine 340, arginine 344, leucine 380, and 392 to 393 (HY). Residues 397-417 (VFFAISWGLITGFNSPFPWFY) traverse the membrane as a helical segment. NADP(+) is bound by residues aspartate 432, 436 to 440 (CRERY), and tyrosine 447.

This sequence belongs to the ERG4/ERG24 family.

The protein localises to the endoplasmic reticulum membrane. It catalyses the reaction ergosterol + NADP(+) = ergosta-5,7,22,24(28)-tetraen-3beta-ol + NADPH + H(+). It participates in steroid metabolism; ergosterol biosynthesis. Its function is as follows. Delta(24(24(1)))-sterol reductase; part of the third module of ergosterol biosynthesis pathway that includes the late steps of the pathway. Catalyzes the last step of ergosterol biosynthesis by converting ergosta-5,7,22,24(28)-tetraen-3beta-ol into ergosterol. The third module or late pathway involves the ergosterol synthesis itself through consecutive reactions that mainly occur in the endoplasmic reticulum (ER) membrane. Firstly, the squalene synthase erg9 catalyzes the condensation of 2 farnesyl pyrophosphate moieties to form squalene, which is the precursor of all steroids. Squalene synthase is crucial for balancing the incorporation of farnesyl diphosphate (FPP) into sterol and nonsterol isoprene synthesis. Secondly, squalene is converted into lanosterol by the consecutive action of the squalene epoxidase erg1 and the lanosterol synthase erg7. Then, the delta(24)-sterol C-methyltransferase erg6 methylates lanosterol at C-24 to produce eburicol. Eburicol is the substrate of the sterol 14-alpha demethylase encoded by cyp51A and cyp51B, to yield 4,4,24-trimethyl ergosta-8,14,24(28)-trienol. The C-14 reductase erg24 then reduces the C14=C15 double bond which leads to 4,4-dimethylfecosterol. A sequence of further demethylations at C-4, involving the C-4 demethylation complex containing the C-4 methylsterol oxidases erg25A or erg25B, the sterol-4-alpha-carboxylate 3-dehydrogenase erg26 and the 3-keto-steroid reductase erg27, leads to the production of fecosterol via 4-methylfecosterol. The C-8 sterol isomerase erg2 then catalyzes the reaction which results in unsaturation at C-7 in the B ring of sterols and thus converts fecosterol to episterol. The sterol-C5-desaturase erg3B then catalyzes the introduction of a C-5 double bond in the B ring to produce 5-dehydroepisterol. The 2 other sterol-C5-desaturases, erg3A and erg3C, seem to be less important in ergosterol biosynthesis. The C-22 sterol desaturase erg5 further converts 5-dehydroepisterol into ergosta-5,7,22,24(28)-tetraen-3beta-ol by forming the C-22(23) double bond in the sterol side chain. Finally, ergosta-5,7,22,24(28)-tetraen-3beta-ol is substrate of the C-24(28) sterol reductases erg4A and erg4B to produce ergosterol. Possible alternative sterol biosynthetic pathways might exist from fecosterol to ergosterol, depending on the activities of the erg3 isoforms. This chain is Delta(24(24(1)))-sterol reductase erg4A, found in Aspergillus fumigatus (strain ATCC MYA-4609 / CBS 101355 / FGSC A1100 / Af293) (Neosartorya fumigata).